Here is a 227-residue protein sequence, read N- to C-terminus: GTP:AMP phosphotransferase AK3, mitochondrial (227 aa).

Positions 17, 19, 20, 21, and 22 each coordinate GTP. Lysine 20 is subject to N6-succinyllysine. Lysine 34 is subject to N6-acetyllysine. Serine 37 carries the post-translational modification Phosphoserine. Residues 37–66 are NMP; the sequence is SSGDLLRDNMLRGTEIGVLAKAFIDQGKLI. 2 residues coordinate AMP: serine 38 and arginine 43. Position 57 is an N6-succinyllysine (lysine 57). Residue lysine 64 coordinates AMP. N6-acetyllysine; alternate is present on residues lysine 64 and lysine 80. Residues lysine 64 and lysine 80 each carry the N6-succinyllysine; alternate modification. Glycine 91, arginine 94, and glutamine 98 together coordinate AMP. An LID region spans residues 127–164; the sequence is ARWIHPASGRVYNIEFNPPKTVGIDDLTGEPLIQREDD. GTP-binding residues include arginine 128, tyrosine 138, asparagine 139, arginine 161, and arginine 172. An N6-acetyllysine; alternate mark is found at lysine 174 and lysine 189. 2 positions are modified to N6-succinyllysine; alternate: lysine 174 and lysine 189. A GTP-binding site is contributed by threonine 201. Lysine 203 is subject to N6-acetyllysine.

This sequence belongs to the adenylate kinase family. AK3 subfamily. Monomer.

Its subcellular location is the mitochondrion matrix. The enzyme catalyses a ribonucleoside 5'-triphosphate + AMP = a ribonucleoside 5'-diphosphate + ADP. The catalysed reaction is GTP + AMP = GDP + ADP. It carries out the reaction ITP + AMP = IDP + ADP. Functionally, mitochondrial adenylate kinase with a specific GTP:AMP phosphotransferase activity. Could also use ITP as phosphate donor. Its physiological function is to recycle GTP into GDP which is necessary for the TCA cycle in the mitochondrial matrix. The chain is GTP:AMP phosphotransferase AK3, mitochondrial from Pongo abelii (Sumatran orangutan).